Consider the following 575-residue polypeptide: Proline--tRNA ligase (575 aa).

This sequence belongs to the class-II aminoacyl-tRNA synthetase family. ProS type 1 subfamily. Homodimer.

Its subcellular location is the cytoplasm. The catalysed reaction is tRNA(Pro) + L-proline + ATP = L-prolyl-tRNA(Pro) + AMP + diphosphate. Its function is as follows. Catalyzes the attachment of proline to tRNA(Pro) in a two-step reaction: proline is first activated by ATP to form Pro-AMP and then transferred to the acceptor end of tRNA(Pro). As ProRS can inadvertently accommodate and process non-cognate amino acids such as alanine and cysteine, to avoid such errors it has two additional distinct editing activities against alanine. One activity is designated as 'pretransfer' editing and involves the tRNA(Pro)-independent hydrolysis of activated Ala-AMP. The other activity is designated 'posttransfer' editing and involves deacylation of mischarged Ala-tRNA(Pro). The misacylated Cys-tRNA(Pro) is not edited by ProRS. This is Proline--tRNA ligase from Pseudothermotoga lettingae (strain ATCC BAA-301 / DSM 14385 / NBRC 107922 / TMO) (Thermotoga lettingae).